We begin with the raw amino-acid sequence, 368 residues long: Glutamine synthetase root isozyme 2 (368 aa).

In terms of domain architecture, GS beta-grasp spans 19–99 (IIAEYIWVGG…VMCDCYEPNG (81 aa)). A disordered region spans residues 38-66 (RTLSGPVDDPSKLPKWNFDGSSTGQAPGD). The GS catalytic domain maps to 106 to 368 (KRHGAAKIFS…NGDGKGAAAP (263 aa)).

Belongs to the glutamine synthetase family. In terms of assembly, homooctamer. Found mainly in the vascular tissues of seedling roots.

Its subcellular location is the cytoplasm. It catalyses the reaction L-glutamate + NH4(+) + ATP = L-glutamine + ADP + phosphate + H(+). Its function is as follows. Plays a role in the flow of nitrogen into nitrogenous organic compounds. This is Glutamine synthetase root isozyme 2 (GLN2) from Zea mays (Maize).